The sequence spans 563 residues: Pre-hexon-linking protein IIIa (563 aa).

Residues 1 to 117 are peripentonal hexon-tethering domain; the sequence is MRKRRTLTAP…ALLHRVSKYN (117 aa). The interval 148–261 is binding to hexon-linking protein; it reads GSLTALNSFL…FTDSVSISRD (114 aa). S235 bears the Phosphoserine; by host mark. T284 carries the phosphothreonine; by host modification. Residues 449–472 are disordered; it reads RTESRSVSRVPTPASSRRSSVAMA. Phosphoserine; by host occurs at positions 452 and 456. A compositionally biased stretch (low complexity) spans 462 to 472; sequence ASSRRSSVAMA. S475 and S486 each carry phosphoserine; by host. A disordered region spans residues 522–543; that stretch reads KYSSAISSDESDDGMSKPDKFL. Positions 549–563 are excised as a propeptide; it reads GNPFAHLRPKLGRCL.

The protein belongs to the adenoviridae hexon-linking protein IIIa family. As to quaternary structure, interacts with hexon proteins; this interaction tethers the peripentonal hexons to hexons situated in the facet. Interacts with the penton protein (via N-terminus). Interacts with packaging protein 3; this interaction is required to promote correct genome packaging. Cleaved near the C-terminus by the viral protease during virion maturation to form the mature protein.

It is found in the virion. The protein resides in the host nucleus. Functionally, structural component of the virion that acts as a cement protein on the capsid exterior which mediates the interactions between the hexons, including the peripentonal hexons, and reaches all the way to the penton vertices. Two hexon linking proteins IIIa, one from each facet, stabilize the unique edge interface between a pair of facets. As the virus enters the host cell, hexon linking proteins IIIa are shed concomitant with virion acidification in the endosome. During virus assembly, seems to play a role in the serotype specificity of the packaging of viral DNA via its interaction with packaging protein 3. The chain is Pre-hexon-linking protein IIIa from Canis lupus familiaris (Dog).